The primary structure comprises 968 residues: Isoleucine--tRNA ligase (968 aa).

A 'HIGH' region motif is present at residues 68-78; sequence PYANGALHMGH. E584 serves as a coordination point for L-isoleucyl-5'-AMP. A 'KMSKS' region motif is present at residues 625–629; it reads KMSKS. K628 lines the ATP pocket. C938, C941, C958, and C961 together coordinate Zn(2+).

Belongs to the class-I aminoacyl-tRNA synthetase family. IleS type 1 subfamily. Monomer. It depends on Zn(2+) as a cofactor.

Its subcellular location is the cytoplasm. The enzyme catalyses tRNA(Ile) + L-isoleucine + ATP = L-isoleucyl-tRNA(Ile) + AMP + diphosphate. Catalyzes the attachment of isoleucine to tRNA(Ile). As IleRS can inadvertently accommodate and process structurally similar amino acids such as valine, to avoid such errors it has two additional distinct tRNA(Ile)-dependent editing activities. One activity is designated as 'pretransfer' editing and involves the hydrolysis of activated Val-AMP. The other activity is designated 'posttransfer' editing and involves deacylation of mischarged Val-tRNA(Ile). The protein is Isoleucine--tRNA ligase of Prochlorococcus marinus (strain MIT 9313).